A 322-amino-acid polypeptide reads, in one-letter code: Putative pyruvyl transferase EpsO (322 aa).

The protein belongs to the polysaccharide pyruvyl transferase family.

May be involved in the production of the exopolysaccharide (EPS) component of the extracellular matrix during biofilm formation. EPS is responsible for the adhesion of chains of cells into bundles. This Bacillus subtilis (strain 168) protein is Putative pyruvyl transferase EpsO (epsO).